A 352-amino-acid chain; its full sequence is Histidinol-phosphate aminotransferase (352 aa).

At K208 the chain carries N6-(pyridoxal phosphate)lysine.

It belongs to the class-II pyridoxal-phosphate-dependent aminotransferase family. Histidinol-phosphate aminotransferase subfamily. In terms of assembly, homodimer. It depends on pyridoxal 5'-phosphate as a cofactor.

The enzyme catalyses L-histidinol phosphate + 2-oxoglutarate = 3-(imidazol-4-yl)-2-oxopropyl phosphate + L-glutamate. It participates in amino-acid biosynthesis; L-histidine biosynthesis; L-histidine from 5-phospho-alpha-D-ribose 1-diphosphate: step 7/9. In Streptococcus sanguinis (strain SK36), this protein is Histidinol-phosphate aminotransferase.